A 239-amino-acid chain; its full sequence is Ribosomal RNA small subunit methyltransferase G (239 aa).

Residues glycine 78, phenylalanine 83, 129 to 130, and arginine 148 contribute to the S-adenosyl-L-methionine site; that span reads AE.

It belongs to the methyltransferase superfamily. RNA methyltransferase RsmG family.

It localises to the cytoplasm. In terms of biological role, specifically methylates the N7 position of a guanine in 16S rRNA. This chain is Ribosomal RNA small subunit methyltransferase G, found in Alkaliphilus metalliredigens (strain QYMF).